The chain runs to 834 residues: Probable glucan 1,3-beta-glucosidase D (834 aa).

Residues 1–33 (MPSHSRSRDRYGGRDSDREARYDYDYARRRYAT) show a composition bias toward basic and acidic residues. Disordered regions lie at residues 1–188 (MPSH…ASHL) and 200–251 (QYEK…TKAR). Topologically, residues 1 to 306 (MPSHSRSRDR…GGRPFWKRKK (306 aa)) are cytoplasmic. The span at 34 to 45 (DDNDDDYDDDEL) shows a compositional bias: acidic residues. 4 stretches are compositionally biased toward basic and acidic residues: residues 46–76 (EHGLNERRYRRDGYLPPRESRTRGYYERDAE), 98–173 (YGHD…ETAA), 201–218 (YEKEERRKRENAKDAAKA), and 228–245 (VVGEESRALRDPPGESHR). Residues 307 to 327 (WIGLGALILILVIVIPVAVVV) form a helical; Signal-anchor for type II membrane protein membrane-spanning segment. Topologically, residues 328–834 (SKKHDNKSDP…PDFGNLPEYY (507 aa)) are extracellular. The interval 331–354 (HDNKSDPADPQGTSPGKSNLDGLS) is disordered. Residues N333, N379, N384, N396, N549, N561, and N570 are each glycosylated (N-linked (GlcNAc...) asparagine). E600 serves as the catalytic Proton donor. N-linked (GlcNAc...) asparagine glycosylation is found at N639, N672, and N692. The active-site Nucleophile is E705.

Belongs to the glycosyl hydrolase 5 (cellulase A) family.

It localises to the cell membrane. The catalysed reaction is Successive hydrolysis of beta-D-glucose units from the non-reducing ends of (1-&gt;3)-beta-D-glucans, releasing alpha-glucose.. Functionally, glucosidase involved in the degradation of cellulosic biomass. Active on lichenan. The protein is Probable glucan 1,3-beta-glucosidase D (exgD) of Neosartorya fischeri (strain ATCC 1020 / DSM 3700 / CBS 544.65 / FGSC A1164 / JCM 1740 / NRRL 181 / WB 181) (Aspergillus fischerianus).